A 110-amino-acid chain; its full sequence is U1-lycotoxin-Ls1kk (110 aa).

A signal peptide spans 1 to 20 (MKFVLLFGVFLVTLFSYSSA). Residues 21-44 (EMLDDFDQADEDELLSLIEKEEAR) constitute a propeptide that is removed on maturation. 4 disulfides stabilise this stretch: Cys-47–Cys-62, Cys-54–Cys-71, Cys-61–Cys-89, and Cys-73–Cys-87.

This sequence belongs to the neurotoxin 19 (CSTX) family. 03 subfamily. As to expression, expressed by the venom gland.

It is found in the secreted. The polypeptide is U1-lycotoxin-Ls1kk (Lycosa singoriensis (Wolf spider)).